The sequence spans 703 residues: Elongation factor G (703 aa).

The tr-type G domain maps to 7–287 (KFTRNIGIAA…AVMRYLPSPA (281 aa)). GTP is bound by residues 16–23 (AHIDAGKT), 84–88 (DTPGH), and 138–141 (NKMD).

It belongs to the TRAFAC class translation factor GTPase superfamily. Classic translation factor GTPase family. EF-G/EF-2 subfamily.

The protein resides in the cytoplasm. Catalyzes the GTP-dependent ribosomal translocation step during translation elongation. During this step, the ribosome changes from the pre-translocational (PRE) to the post-translocational (POST) state as the newly formed A-site-bound peptidyl-tRNA and P-site-bound deacylated tRNA move to the P and E sites, respectively. Catalyzes the coordinated movement of the two tRNA molecules, the mRNA and conformational changes in the ribosome. This is Elongation factor G from Christiangramia forsetii (strain DSM 17595 / CGMCC 1.15422 / KT0803) (Gramella forsetii).